We begin with the raw amino-acid sequence, 663 residues long: UvrABC system protein B (663 aa).

Basic and acidic residues predominate over residues 1–10; the sequence is MIDKRDDKPF. The segment at 1 to 23 is disordered; the sequence is MIDKRDDKPFKLKSKYKPSGDQP. The region spanning 31–271 is the Helicase ATP-binding domain; the sequence is DNIEGGEKAQ…EQSIAKIQAE (241 aa). 44–51 is an ATP binding site; that stretch reads GATGTGKT. Residues 97-120 carry the Beta-hairpin motif; it reads YYDYYQPEAYVPSSDTYIEKDSSV. The Helicase C-terminal domain maps to 435 to 601; the sequence is QMDDLLGEIN…TIKKDIRGLI (167 aa). The 36-residue stretch at 627–662 folds into the UVR domain; sequence KEAINALQKQMQEAAELLDFELAAQMRDLILELKLM.

The protein belongs to the UvrB family. Forms a heterotetramer with UvrA during the search for lesions. Interacts with UvrC in an incision complex.

Its subcellular location is the cytoplasm. In terms of biological role, the UvrABC repair system catalyzes the recognition and processing of DNA lesions. A damage recognition complex composed of 2 UvrA and 2 UvrB subunits scans DNA for abnormalities. Upon binding of the UvrA(2)B(2) complex to a putative damaged site, the DNA wraps around one UvrB monomer. DNA wrap is dependent on ATP binding by UvrB and probably causes local melting of the DNA helix, facilitating insertion of UvrB beta-hairpin between the DNA strands. Then UvrB probes one DNA strand for the presence of a lesion. If a lesion is found the UvrA subunits dissociate and the UvrB-DNA preincision complex is formed. This complex is subsequently bound by UvrC and the second UvrB is released. If no lesion is found, the DNA wraps around the other UvrB subunit that will check the other stand for damage. The protein is UvrABC system protein B of Streptococcus pyogenes serotype M4 (strain MGAS10750).